A 555-amino-acid chain; its full sequence is CCR4-NOT transcription complex subunit 6-like (555 aa).

The interval M1–R152 is required for interaction with CNOT1, CNOT3 and CNOT7. LRR repeat units lie at residues H57–L78, N80–M101, S103–F125, and Q126–P148. The segment at M158–R555 is nuclease domain. E240 serves as a coordination point for Mg(2+). 4 residues coordinate substrate: E240, E276, H360, and P365. D410 contacts Mg(2+). The Proton donor/acceptor role is filled by D410. 3 residues coordinate substrate: N412, N479, and F484.

This sequence belongs to the CCR4/nocturin family. Component of the CCR4-NOT complex; distinct complexes seem to exist that differ in the participation of probably mutually exclusive catalytic subunits; the complex contains two deadenylase subunits, CNOT6 or CNOT6L, and CNOT7 or CNOT8. Interacts with CNOT1, CNOT3, CNOT7, CNOT8 and CNOT9. Interacts with TOB1. Interacts with NANOS2. Interacts with ZFP36. Interacts with ZFP36L2. Interacts with RBM46. It depends on Mg(2+) as a cofactor. As to expression, highly expressed in placenta, skeletal muscle, pancreas, testis and leukocytes. Weakly expressed in heart, spleen and thymus.

It is found in the cytoplasm. It localises to the nucleus. It catalyses the reaction Exonucleolytic cleavage of poly(A) to 5'-AMP.. With respect to regulation, inhibited by free AMP, and with lesser efficiency also by CMP, GMP, UMP, ATP and neomycin. Its function is as follows. Has 3'-5' poly(A) exoribonuclease activity for synthetic poly(A) RNA substrate. Catalytic component of the CCR4-NOT complex which is one of the major cellular mRNA deadenylases and is linked to various cellular processes including bulk mRNA degradation, miRNA-mediated repression, translational repression during translational initiation and general transcription regulation. Additional complex functions may be a consequence of its influence on mRNA expression. May be involved in the deadenylation-dependent degradation of mRNAs through the 3'-UTR AU-rich element-mediated mechanism. Involved in deadenylation-dependent degradation of CDKN1B mRNA. Its mRNA deadenylase activity can be inhibited by TOB1. Mediates cell proliferation and cell survival and prevents cellular senescence. This chain is CCR4-NOT transcription complex subunit 6-like (CNOT6L), found in Homo sapiens (Human).